The following is an 895-amino-acid chain: Glutamate receptor 2.3 (895 aa).

The N-terminal stretch at Met-1–Gly-23 is a signal peptide. The Extracellular portion of the chain corresponds to Gln-24–Lys-582. N-linked (GlcNAc...) asparagine glycans are attached at residues Asn-52, Asn-203, Asn-266, Asn-330, Asn-342, Asn-477, and Asn-542. A helical membrane pass occupies residues Leu-583 to Tyr-603. The Cytoplasmic portion of the chain corresponds to Lys-604 to Ser-610. Residues Gly-611–Ala-631 form a helical membrane-spanning segment. The Cytoplasmic segment spans residues Pro-632–Arg-635. Residues Val-636 to Thr-656 traverse the membrane as a helical segment. Over Gln-657–Ser-830 the chain is Extracellular. Residues Phe-831–Tyr-851 traverse the membrane as a helical segment. The Cytoplasmic portion of the chain corresponds to Cys-852 to Leu-895. The segment at Ser-873–Leu-895 is disordered.

Belongs to the glutamate-gated ion channel (TC 1.A.10.1) family. As to quaternary structure, may form heteromers. In terms of tissue distribution, expressed predominantly in roots.

It is found in the membrane. Glutamate-gated receptor that probably acts as a non-selective cation channel. May be involved in light-signal transduction and calcium homeostasis via the regulation of calcium influx into cells. This chain is Glutamate receptor 2.3 (GLR2.3), found in Arabidopsis thaliana (Mouse-ear cress).